The chain runs to 256 residues: Thiazole synthase (256 aa).

Lysine 95 acts as the Schiff-base intermediate with DXP in catalysis. 1-deoxy-D-xylulose 5-phosphate-binding positions include glycine 156, 182-183 (AG), and 204-205 (NT).

It belongs to the ThiG family. As to quaternary structure, homotetramer. Forms heterodimers with either ThiH or ThiS.

Its subcellular location is the cytoplasm. It catalyses the reaction [ThiS sulfur-carrier protein]-C-terminal-Gly-aminoethanethioate + 2-iminoacetate + 1-deoxy-D-xylulose 5-phosphate = [ThiS sulfur-carrier protein]-C-terminal Gly-Gly + 2-[(2R,5Z)-2-carboxy-4-methylthiazol-5(2H)-ylidene]ethyl phosphate + 2 H2O + H(+). It functions in the pathway cofactor biosynthesis; thiamine diphosphate biosynthesis. Catalyzes the rearrangement of 1-deoxy-D-xylulose 5-phosphate (DXP) to produce the thiazole phosphate moiety of thiamine. Sulfur is provided by the thiocarboxylate moiety of the carrier protein ThiS. In vitro, sulfur can be provided by H(2)S. The sequence is that of Thiazole synthase from Salmonella paratyphi A (strain ATCC 9150 / SARB42).